Reading from the N-terminus, the 168-residue chain is Transcription elongation factor GreB (168 aa).

Residues K61–V84 are a coiled coil.

This sequence belongs to the GreA/GreB family. GreB subfamily.

Its function is as follows. Necessary for efficient RNA polymerase transcription elongation past template-encoded arresting sites. The arresting sites in DNA have the property of trapping a certain fraction of elongating RNA polymerases that pass through, resulting in locked ternary complexes. Cleavage of the nascent transcript by cleavage factors such as GreA or GreB allows the resumption of elongation from the new 3'terminus. GreB releases sequences of up to 9 nucleotides in length. This Pseudomonas aeruginosa (strain ATCC 15692 / DSM 22644 / CIP 104116 / JCM 14847 / LMG 12228 / 1C / PRS 101 / PAO1) protein is Transcription elongation factor GreB.